Here is a 980-residue protein sequence, read N- to C-terminus: Ankycorbin (980 aa).

An N-acetylmethionine modification is found at methionine 1. Phosphoserine is present on serine 11. 7 ANK repeats span residues 18–51 (KNDDRLLQAVENGDAEKVASLLGKKGASATKHDS), 52–81 (EGKTAFHLAAAKGHVECLRVMITHGVDVTA), 85–114 (TGHSALHLAAKNSHHECIRKLLQSKCPAES), 118–147 (SGKTALHYAAAQGCLQAVQILCEHKSPINL), 151–180 (DGNIPLLLAVQNGHSEICHFLLDHGADVNS), 184–213 (SGRTALMLACEIGSSNAVEALIKKGADLNL), and 217–247 (LGYNALHYSKLSENAGIQSLLLSKISQDADL). Basic and acidic residues predominate over residues 247–259 (LKTPTKPKQHDQV). Residues 247–301 (LKTPTKPKQHDQVSKISSERSGTPKKRKAPPPPISPTQLSDVSSPRSITSTPLSG) are disordered. Threonine 249 is modified (phosphothreonine). The Nuclear localization signal signature appears at 270 to 276 (PKKRKAP). Residues serine 281, serine 286, and serine 293 each carry the phosphoserine modification. Residues 282–299 (PTQLSDVSSPRSITSTPL) are compositionally biased toward polar residues. A phosphothreonine mark is found at threonine 295 and threonine 297. Phosphoserine occurs at positions 300, 304, 318, 327, 329, 340, 341, 350, 358, 419, 512, 515, 667, and 915. Positions 349–374 (LSLLQAKVASLTLHNKELQDKLQAKS) form a coiled coil. The segment at 387 to 423 (YHSTQTDLGPSLGKPGETSPPDSKSSPSVLIHSLGKS) is disordered. Residues 425–947 (TDNDVRIQQL…QHQEVISVYR (523 aa)) adopt a coiled-coil conformation.

In terms of assembly, interacts with PALLD. Associates with actin. However, does not bind F-actin directly. In terms of tissue distribution, highly expressed in placenta, muscle, kidney and testis. Moderately expressed in heart, brain, lung, liver and intestine. Isoform 2 is widely expressed and expressed in fetal and adult testes, and spermatozoa.

It localises to the cytoplasm. The protein localises to the cytoskeleton. It is found in the stress fiber. Its subcellular location is the cell cortex. The protein resides in the cell junction. It localises to the nucleus. In terms of biological role, plays a role in actin regulation at the ectoplasmic specialization, a type of cell junction specific to testis. Important for establishment of sperm polarity and normal spermatid adhesion. May also promote integrity of Sertoli cell tight junctions at the blood-testis barrier. The sequence is that of Ankycorbin (RAI14) from Homo sapiens (Human).